The sequence spans 1236 residues: ESX-4 secretion system protein EccC4 (1236 aa).

The next 2 helical transmembrane spans lie at 32–52 (LLPVVMSVATVGVMVTVFLPG) and 59–79 (PTFLAFPMMMLVSLVVTAVTG). FtsK domains follow at residues 407–607 (GTAV…SESR), 747–936 (RVPL…ADSE), and 1018–1201 (GQPV…DEGA). ATP is bound by residues 430–437 (GATGSGKS), 765–772 (GAPQTGKS), and 1035–1042 (GDNECGKT).

As to quaternary structure, part of the ESX-4 / type VII secretion system (T7SS), which is composed of cytosolic and membrane components.

It is found in the cell membrane. The sequence is that of ESX-4 secretion system protein EccC4 (eccC4) from Mycobacterium tuberculosis (strain ATCC 25618 / H37Rv).